We begin with the raw amino-acid sequence, 542 residues long: CTP synthase (542 aa).

Positions 1–265 are amidoligase domain; it reads MARYIFITGG…DDEVLAAFGL (265 aa). Residue S13 participates in CTP binding. Position 13 (S13) interacts with UTP. 14-19 is an ATP binding site; it reads SLGKGL. Residue Y54 coordinates L-glutamine. D71 contacts ATP. Positions 71 and 139 each coordinate Mg(2+). CTP contacts are provided by residues 146–148, 186–191, and K222; these read DIE and KTKPTQ. Residues 186-191 and K222 each bind UTP; that span reads KTKPTQ. ATP is bound at residue 238–240; it reads RDA. The 252-residue stretch at 290-541 folds into the Glutamine amidotransferase type-1 domain; it reads TIAIVGKYTG…IQAAVVQSRL (252 aa). G352 lines the L-glutamine pocket. Residue C379 is the Nucleophile; for glutamine hydrolysis of the active site. Residues 380–383, E403, and R469 each bind L-glutamine; that span reads FGMQ. Catalysis depends on residues H514 and E516.

The protein belongs to the CTP synthase family. In terms of assembly, homotetramer.

It carries out the reaction UTP + L-glutamine + ATP + H2O = CTP + L-glutamate + ADP + phosphate + 2 H(+). The catalysed reaction is L-glutamine + H2O = L-glutamate + NH4(+). It catalyses the reaction UTP + NH4(+) + ATP = CTP + ADP + phosphate + 2 H(+). It functions in the pathway pyrimidine metabolism; CTP biosynthesis via de novo pathway; CTP from UDP: step 2/2. Its activity is regulated as follows. Allosterically activated by GTP, when glutamine is the substrate; GTP has no effect on the reaction when ammonia is the substrate. The allosteric effector GTP functions by stabilizing the protein conformation that binds the tetrahedral intermediate(s) formed during glutamine hydrolysis. Inhibited by the product CTP, via allosteric rather than competitive inhibition. In terms of biological role, catalyzes the ATP-dependent amination of UTP to CTP with either L-glutamine or ammonia as the source of nitrogen. Regulates intracellular CTP levels through interactions with the four ribonucleotide triphosphates. The protein is CTP synthase of Nitrobacter hamburgensis (strain DSM 10229 / NCIMB 13809 / X14).